Consider the following 309-residue polypeptide: Putative S-adenosyl-L-methionine-dependent methyltransferase Mvan_0104 (309 aa).

S-adenosyl-L-methionine contacts are provided by residues Asp-134 and 163–164; that span reads DL.

It belongs to the UPF0677 family.

Exhibits S-adenosyl-L-methionine-dependent methyltransferase activity. This Mycolicibacterium vanbaalenii (strain DSM 7251 / JCM 13017 / BCRC 16820 / KCTC 9966 / NRRL B-24157 / PYR-1) (Mycobacterium vanbaalenii) protein is Putative S-adenosyl-L-methionine-dependent methyltransferase Mvan_0104.